Reading from the N-terminus, the 562-residue chain is NAD-dependent malic enzyme (562 aa).

Y101 (proton donor) is an active-site residue. NAD(+) is bound at residue R154. K172 (proton acceptor) is an active-site residue. Positions 243, 244, and 267 each coordinate a divalent metal cation. Residues D267 and N415 each coordinate NAD(+).

The protein belongs to the malic enzymes family. Homotetramer. It depends on Mg(2+) as a cofactor. Mn(2+) serves as cofactor.

It catalyses the reaction (S)-malate + NAD(+) = pyruvate + CO2 + NADH. The enzyme catalyses oxaloacetate + H(+) = pyruvate + CO2. This Vibrio campbellii (strain ATCC BAA-1116) protein is NAD-dependent malic enzyme.